The chain runs to 300 residues: 33 kDa chaperonin (300 aa).

Cystine bridges form between C235-C237 and C269-C272.

Belongs to the HSP33 family. In terms of processing, under oxidizing conditions two disulfide bonds are formed involving the reactive cysteines. Under reducing conditions zinc is bound to the reactive cysteines and the protein is inactive.

Its subcellular location is the cytoplasm. Redox regulated molecular chaperone. Protects both thermally unfolding and oxidatively damaged proteins from irreversible aggregation. Plays an important role in the bacterial defense system toward oxidative stress. This is 33 kDa chaperonin from Pseudomonas fluorescens (strain Pf0-1).